A 373-amino-acid chain; its full sequence is STE20-related kinase adapter protein alpha (373 aa).

In terms of domain architecture, Protein kinase spans 11 to 321; that stretch reads YELLTVIGKG…ASTLLNHSFF (311 aa). Polar residues predominate over residues 255 to 281; the sequence is STSRSAANSGLSESLAPSTPRTSNGDS. Residues 255-288 form a disordered region; the sequence is STSRSAANSGLSESLAPSTPRTSNGDSPSHPYHR. Threonine 361 carries the phosphothreonine; by LKB1 modification.

The protein belongs to the protein kinase superfamily. STE Ser/Thr protein kinase family. STE20 subfamily. Component of a trimeric complex composed of STK11/LKB1, STRAD (STRADA or STRADB) and CAB39/MO25 (CAB39/MO25alpha or CAB39L/MO25beta): the complex tethers STK11/LKB1 in the cytoplasm and stimulates its catalytic activity.

The protein resides in the nucleus. It localises to the cytoplasm. In terms of biological role, pseudokinase which, in complex with CAB39/MO25 (CAB39/MO25alpha or CAB39L/MO25beta), binds to and activates STK11/LKB1. Adopts a closed conformation typical of active protein kinases and binds STK11/LKB1 as a pseudosubstrate, promoting conformational change of STK11/LKB1 in an active conformation. The sequence is that of STE20-related kinase adapter protein alpha (STRADA) from Bos taurus (Bovine).